The primary structure comprises 948 residues: UvrABC system protein A (948 aa).

Position 33-40 (33-40) interacts with ATP; sequence GLSGSGKS. A C4-type zinc finger spans residues 252-279; that stretch reads CPICGFSIGELEPRMFSFNSPFGACPTC. ABC transporter domains follow at residues 309 to 587 and 607 to 935; these read WIPT…KKSL and ASDR…KYLK. Position 639–646 (639–646) interacts with ATP; it reads GVSGSGKS. The C4-type zinc finger occupies 738-764; that stretch reads CEACKGDGIIKIEMHFLPDVYVPCEVC.

This sequence belongs to the ABC transporter superfamily. UvrA family. In terms of assembly, forms a heterotetramer with UvrB during the search for lesions.

It is found in the cytoplasm. Its function is as follows. The UvrABC repair system catalyzes the recognition and processing of DNA lesions. UvrA is an ATPase and a DNA-binding protein. A damage recognition complex composed of 2 UvrA and 2 UvrB subunits scans DNA for abnormalities. When the presence of a lesion has been verified by UvrB, the UvrA molecules dissociate. The polypeptide is UvrABC system protein A (Staphylococcus aureus (strain MSSA476)).